A 107-amino-acid chain; its full sequence is Protein p13 MTCP-1 (107 aa).

The protein belongs to the TCL1 family. In terms of assembly, interacts with AKT1 and AKT2 (via PH domain). Does not interact with AKT3. Not found at a significant level in any tissue.

Enhances the phosphorylation and activation of AKT1 and AKT2. This is Protein p13 MTCP-1 (MTCP1) from Homo sapiens (Human).